A 274-amino-acid polypeptide reads, in one-letter code: 3-methyl-2-oxobutanoate hydroxymethyltransferase (274 aa).

D49 and D88 together coordinate Mg(2+). 3-methyl-2-oxobutanoate is bound by residues 49–50, D88, and K118; that span reads DS. Mg(2+) is bound at residue E120. E187 (proton acceptor) is an active-site residue.

This sequence belongs to the PanB family. In terms of assembly, homodecamer; pentamer of dimers. It depends on Mg(2+) as a cofactor.

The protein resides in the cytoplasm. The enzyme catalyses 3-methyl-2-oxobutanoate + (6R)-5,10-methylene-5,6,7,8-tetrahydrofolate + H2O = 2-dehydropantoate + (6S)-5,6,7,8-tetrahydrofolate. It participates in cofactor biosynthesis; (R)-pantothenate biosynthesis; (R)-pantoate from 3-methyl-2-oxobutanoate: step 1/2. Functionally, catalyzes the reversible reaction in which hydroxymethyl group from 5,10-methylenetetrahydrofolate is transferred onto alpha-ketoisovalerate to form ketopantoate. The protein is 3-methyl-2-oxobutanoate hydroxymethyltransferase of Parvibaculum lavamentivorans (strain DS-1 / DSM 13023 / NCIMB 13966).